The primary structure comprises 354 residues: Neutral protease 2 homolog SNOG_02177 (354 aa).

A signal peptide spans 1–19 (MKFQILSVAALASLASAVS). Positions 20 to 182 (DALDKRDSPL…WIDLAKRTIV (163 aa)) are excised as a propeptide. Disulfide bonds link Cys186/Cys257 and Cys264/Cys282. The N-linked (GlcNAc...) asparagine glycan is linked to Asn214. His306 contacts Zn(2+). Glu307 is an active-site residue. His310 contacts Zn(2+).

It belongs to the peptidase M35 family. Zn(2+) serves as cofactor.

The protein resides in the secreted. It carries out the reaction Preferential cleavage of bonds with hydrophobic residues in P1'. Also 3-Asn-|-Gln-4 and 8-Gly-|-Ser-9 bonds in insulin B chain.. Its function is as follows. Secreted metalloproteinase that allows assimilation of proteinaceous substrates. Shows high activities on basic nuclear substrates such as histone and protamine. The chain is Neutral protease 2 homolog SNOG_02177 from Phaeosphaeria nodorum (strain SN15 / ATCC MYA-4574 / FGSC 10173) (Glume blotch fungus).